The following is a 444-amino-acid chain: Glutamate dehydrogenase (444 aa).

Lys-124 is a catalytic residue.

This sequence belongs to the Glu/Leu/Phe/Val dehydrogenases family. In terms of assembly, homohexamer.

It catalyses the reaction L-glutamate + NAD(+) + H2O = 2-oxoglutarate + NH4(+) + NADH + H(+). The enzyme catalyses L-glutamate + NADP(+) + H2O = 2-oxoglutarate + NH4(+) + NADPH + H(+). This is Glutamate dehydrogenase (gdhA) from Bacteroides thetaiotaomicron (strain ATCC 29148 / DSM 2079 / JCM 5827 / CCUG 10774 / NCTC 10582 / VPI-5482 / E50).